The sequence spans 282 residues: MISMNPIMIRNNLSRSSSPAAPPTTNHSSTVDYFSIKPKLSLDINSQSDSNSTQSNNNEDTHSEQSDYNSYTHNQYYDSDDDEDDFDIRDQLLDPFDKITLSNCNEEYYSPLTPFDGQTTSPQDSIISSKSSNKSTTVVPSPQFQLTLPKLTTYSFLIVDDNIINLKILNRILLKLFPKCHIVQIQDSKLVKDLLHKQSFDSIFIDIEMPDVNGIDIAQFVRQDTKFDNMGMVAVTTRNSTQDLELFKQCGIDFTFHKPLNYSLDFMANSIDDIIITRKNKI.

Composition is skewed to low complexity over residues 12–30 and 45–58; these read NLSR…HSST and NSQS…SNNN. Disordered regions lie at residues 12–31, 43–84, and 112–139; these read NLSR…SSTV, DINS…DDED, and LTPF…TTVV. The segment covering 66-77 has biased composition (polar residues); that stretch reads SDYNSYTHNQYY. Low complexity predominate over residues 125–139; the sequence is SIISSKSSNKSTTVV. The Response regulatory domain maps to 155-273; it reads SFLIVDDNII…LDFMANSIDD (119 aa). Asp-206 bears the 4-aspartylphosphate mark.

In terms of biological role, required for stress adaptation, morphogenesis and virulence. The protein is Stress response regulator protein 1 (SRR1) of Candida albicans (strain SC5314 / ATCC MYA-2876) (Yeast).